The chain runs to 258 residues: Isoprenyl transferase 2 (258 aa).

Aspartate 39 is a catalytic residue. Aspartate 39 serves as a coordination point for Mg(2+). Substrate contacts are provided by residues 40-43 (GNRR), tryptophan 44, arginine 52, histidine 57, and 85-87 (SND). The active-site Proton acceptor is the asparagine 88. Substrate contacts are provided by residues arginine 92, arginine 207, and 213–215 (RLS). Position 226 (glutamate 226) interacts with Mg(2+).

It belongs to the UPP synthase family. Homodimer. Mg(2+) serves as cofactor.

Its function is as follows. Catalyzes the condensation of isopentenyl diphosphate (IPP) with allylic pyrophosphates generating different type of terpenoids. The protein is Isoprenyl transferase 2 of Tropheryma whipplei (strain Twist) (Whipple's bacillus).